A 288-amino-acid chain; its full sequence is ATP synthase gamma chain (288 aa).

This sequence belongs to the ATPase gamma chain family. F-type ATPases have 2 components, CF(1) - the catalytic core - and CF(0) - the membrane proton channel. CF(1) has five subunits: alpha(3), beta(3), gamma(1), delta(1), epsilon(1). CF(0) has three main subunits: a, b and c.

The protein resides in the cell membrane. Its function is as follows. Produces ATP from ADP in the presence of a proton gradient across the membrane. The gamma chain is believed to be important in regulating ATPase activity and the flow of protons through the CF(0) complex. In Bacillus pumilus (strain SAFR-032), this protein is ATP synthase gamma chain.